A 299-amino-acid polypeptide reads, in one-letter code: uncharacterized protein (299 aa).

The chain crosses the membrane as a helical span at residues 25-45 (LLYFFKSLAMILFFIFFSLTS).

The protein localises to the membrane. This is an uncharacterized protein from Rickettsia prowazekii (strain Madrid E).